A 61-amino-acid polypeptide reads, in one-letter code: Large ribosomal subunit protein uL30 (61 aa).

The protein belongs to the universal ribosomal protein uL30 family. Part of the 50S ribosomal subunit.

This Nitrosomonas eutropha (strain DSM 101675 / C91 / Nm57) protein is Large ribosomal subunit protein uL30.